Here is a 337-residue protein sequence, read N- to C-terminus: 5-formaminoimidazole-4-carboxamide-1-(beta)-D-ribofuranosyl 5'-monophosphate synthetase (337 aa).

Residues His-14 and Ser-74 each coordinate 5-amino-1-(5-phospho-beta-D-ribosyl)imidazole-4-carboxamide. The region spanning 81-328 (VELVERMKVP…IAREIRLAIE (248 aa)) is the ATP-grasp domain. Residues 125-185 (PDDI…VPVY) and Glu-207 contribute to the ATP site. Asn-235 is a binding site for 5-amino-1-(5-phospho-beta-D-ribosyl)imidazole-4-carboxamide. Glu-273 and Glu-286 together coordinate Mg(2+).

Belongs to the phosphohexose mutase family. It depends on Mg(2+) as a cofactor. Mn(2+) is required as a cofactor.

The catalysed reaction is 5-amino-1-(5-phospho-beta-D-ribosyl)imidazole-4-carboxamide + formate + ATP = 5-formamido-1-(5-phospho-D-ribosyl)imidazole-4-carboxamide + ADP + phosphate. The protein operates within purine metabolism; IMP biosynthesis via de novo pathway; 5-formamido-1-(5-phospho-D-ribosyl)imidazole-4-carboxamide from 5-amino-1-(5-phospho-D-ribosyl)imidazole-4-carboxamide (formate route): step 1/1. Catalyzes the ATP- and formate-dependent formylation of 5-aminoimidazole-4-carboxamide-1-beta-d-ribofuranosyl 5'-monophosphate (AICAR) to 5-formaminoimidazole-4-carboxamide-1-beta-d-ribofuranosyl 5'-monophosphate (FAICAR) in the absence of folates. This Pyrococcus abyssi (strain GE5 / Orsay) protein is 5-formaminoimidazole-4-carboxamide-1-(beta)-D-ribofuranosyl 5'-monophosphate synthetase.